Here is a 156-residue protein sequence, read N- to C-terminus: Small ribosomal subunit protein uS7 (156 aa).

Belongs to the universal ribosomal protein uS7 family. In terms of assembly, part of the 30S ribosomal subunit. Contacts proteins S9 and S11.

In terms of biological role, one of the primary rRNA binding proteins, it binds directly to 16S rRNA where it nucleates assembly of the head domain of the 30S subunit. Is located at the subunit interface close to the decoding center, probably blocks exit of the E-site tRNA. This is Small ribosomal subunit protein uS7 from Geobacter metallireducens (strain ATCC 53774 / DSM 7210 / GS-15).